The primary structure comprises 104 residues: Large ribosomal subunit protein uL23 (104 aa).

This sequence belongs to the universal ribosomal protein uL23 family. As to quaternary structure, part of the 50S ribosomal subunit. Contacts protein L29, and trigger factor when it is bound to the ribosome.

Functionally, one of the early assembly proteins it binds 23S rRNA. One of the proteins that surrounds the polypeptide exit tunnel on the outside of the ribosome. Forms the main docking site for trigger factor binding to the ribosome. The polypeptide is Large ribosomal subunit protein uL23 (Paraburkholderia phymatum (strain DSM 17167 / CIP 108236 / LMG 21445 / STM815) (Burkholderia phymatum)).